The following is a 73-amino-acid chain: Kappa-scoloptoxin SsmTx-I (73 aa).

The signal sequence occupies residues Met1–Gly25. The propeptide occupies Glu26–Arg37. 2 cysteine pairs are disulfide-bonded: Cys45–Cys56 and Cys50–Cys63.

It belongs to the scoloptoxin-04 family. In terms of tissue distribution, expressed by the venom gland.

It localises to the secreted. In terms of biological role, exhibits highly specific blockage of Kv2.1/KCNB1 (IC(50)=41.7 nM) voltage-gated potassium channels. This blockage is not associated with a significant change in steady-state activation, suggesting that this toxin acts as a channel blocker rather than a gating-modifier. Shows potential analgesic activities in formalin-induced paw licking, thermal pain, and acetic acid-induced abdominal writhing mice models. This is Kappa-scoloptoxin SsmTx-I from Scolopendra mutilans (Chinese red-headed centipede).